The sequence spans 120 residues: Autophagy-related protein 8C (120 aa).

The segment at 1–20 (MARSSFKLEHPLERRQAEAN) is disordered. G117 carries the Phosphatidylethanolamine amidated glycine lipid modification. A propeptide spans 118 to 120 (LFV) (removed in mature form).

This sequence belongs to the ATG8 family. Interacts with ATG4. The C-terminal 3 residues are removed by ATG4 to expose Gly-117 at the C-terminus. The C-terminal Gly is then amidated with phosphatidylethanolamine by an activating system similar to that for ubiquitin.

It is found in the cytoplasmic vesicle. It localises to the autophagosome membrane. The protein localises to the vacuole membrane. Its subcellular location is the cytoplasm. The protein resides in the cytoskeleton. Ubiquitin-like modifier involved in autophagosomes formation. May mediate the delivery of the autophagosomes to the vacuole via the microtubule cytoskeleton. This Oryza sativa subsp. indica (Rice) protein is Autophagy-related protein 8C (ATG8C).